The sequence spans 188 residues: Probable chemoreceptor glutamine deamidase CheD (188 aa).

It belongs to the CheD family.

It catalyses the reaction L-glutaminyl-[protein] + H2O = L-glutamyl-[protein] + NH4(+). Its function is as follows. Probably deamidates glutamine residues to glutamate on methyl-accepting chemotaxis receptors (MCPs), playing an important role in chemotaxis. The chain is Probable chemoreceptor glutamine deamidase CheD from Caulobacter sp. (strain K31).